A 739-amino-acid polypeptide reads, in one-letter code: Thiamine biosynthesis multifunctional protein ThiED (739 aa).

Residues 1 to 210 are thiamine-phosphate synthase; the sequence is MTDFSLYLVT…PSPAEAAREL (210 aa). 4-amino-2-methyl-5-(diphosphooxymethyl)pyrimidine is bound by residues 37 to 41 and N69; that span reads QLRDK. D70 and D88 together coordinate Mg(2+). T107 provides a ligand contact to 4-amino-2-methyl-5-(diphosphooxymethyl)pyrimidine. 140–142 contributes to the 2-[(2R,5Z)-2-carboxy-4-methylthiazol-5(2H)-ylidene]ethyl phosphate binding site; it reads TDT. Position 143 (K143) interacts with 4-amino-2-methyl-5-(diphosphooxymethyl)pyrimidine. Residues G174 and 194–195 contribute to the 2-[(2R,5Z)-2-carboxy-4-methylthiazol-5(2H)-ylidene]ethyl phosphate site; that span reads VS. The hydroxymethylpyrimidine/phosphomethylpyrimidine kinase stretch occupies residues 226–481; the sequence is LTIAGTDPTG…GSGSGPVDHF (256 aa). Q263 is a binding site for 4-amino-5-hydroxymethyl-2-methylpyrimidine. The interval 527–739 is thiaminase-2; it reads YTRALWEATG…FDQATRQGWN (213 aa).

The protein in the N-terminal section; belongs to the thiamine-phosphate synthase family. It in the central section; belongs to the ThiD family. In the C-terminal section; belongs to the thiaminase-2 family. It depends on Mg(2+) as a cofactor.

The catalysed reaction is 2-[(2R,5Z)-2-carboxy-4-methylthiazol-5(2H)-ylidene]ethyl phosphate + 4-amino-2-methyl-5-(diphosphooxymethyl)pyrimidine + 2 H(+) = thiamine phosphate + CO2 + diphosphate. It carries out the reaction 2-(2-carboxy-4-methylthiazol-5-yl)ethyl phosphate + 4-amino-2-methyl-5-(diphosphooxymethyl)pyrimidine + 2 H(+) = thiamine phosphate + CO2 + diphosphate. It catalyses the reaction 4-methyl-5-(2-phosphooxyethyl)-thiazole + 4-amino-2-methyl-5-(diphosphooxymethyl)pyrimidine + H(+) = thiamine phosphate + diphosphate. The enzyme catalyses 4-amino-5-hydroxymethyl-2-methylpyrimidine + ATP = 4-amino-2-methyl-5-(phosphooxymethyl)pyrimidine + ADP + H(+). The catalysed reaction is 4-amino-2-methyl-5-(phosphooxymethyl)pyrimidine + ATP = 4-amino-2-methyl-5-(diphosphooxymethyl)pyrimidine + ADP. Its pathway is cofactor biosynthesis; thiamine diphosphate biosynthesis; 4-amino-2-methyl-5-diphosphomethylpyrimidine from 5-amino-1-(5-phospho-D-ribosyl)imidazole: step 3/3. It functions in the pathway cofactor biosynthesis; thiamine diphosphate biosynthesis; thiamine phosphate from 4-amino-2-methyl-5-diphosphomethylpyrimidine and 4-methyl-5-(2-phosphoethyl)-thiazole: step 1/1. Its function is as follows. Condenses 4-methyl-5-(beta-hydroxyethyl)thiazole monophosphate (THZ-P) and 2-methyl-4-amino-5-hydroxymethyl pyrimidine pyrophosphate (HMP-PP) to form thiamine monophosphate (TMP). In terms of biological role, catalyzes the phosphorylation of hydroxymethylpyrimidine phosphate (HMP-P) to HMP-PP, and of HMP to HMP-P. This Corynebacterium efficiens (strain DSM 44549 / YS-314 / AJ 12310 / JCM 11189 / NBRC 100395) protein is Thiamine biosynthesis multifunctional protein ThiED (thiED).